A 60-amino-acid chain; its full sequence is Potassium channel toxin-like Tx677 (60 aa).

The N-terminal stretch at 1–22 is a signal peptide; that stretch reads MKISALVMITLLICSMMILCQG. Intrachain disulfides connect Cys-30–Cys-51, Cys-36–Cys-56, and Cys-40–Cys-58.

This sequence belongs to the short scorpion toxin superfamily. Potassium channel inhibitor family. Expressed by the venom gland.

Its subcellular location is the secreted. In terms of biological role, weakly inhibits Kv11.1/KCNH2/ERG1, Kv1.2/KCNA2 and Kv1.3/KCNA3 voltage-gated potassium channels. The sequence is that of Potassium channel toxin-like Tx677 from Buthus israelis (Israeli scorpion).